The chain runs to 408 residues: Multidrug resistance protein MdtG (408 aa).

10 helical membrane-spanning segments follow: residues 16–36 (LIVAWLGCFLTGAAFSLVMPF), 58–78 (IVFSITFLFSAIASPFWGGLA), 92–112 (LGMGIVMVLMGLAQNIWQFLI), 115–135 (ALLGLLGGFVPNANALIATQV), 146–166 (TLSTGGVSGALLGPMAGGLLA), 173–193 (PVFFITASVLILCFFVTLFCI), 224–244 (LFVTTLIIQVATGSIAPILTL), 256–276 (VAFISGMIASVPGVAALLSAP), 290–310 (ILITALIFSVLLLIPMSYVQT), and 378–398 (AVFLVTAGVVLFNAVYSWNSL).

This sequence belongs to the major facilitator superfamily. DHA1 family. MdtG (TC 2.A.1.2.20) subfamily.

It localises to the cell inner membrane. Confers resistance to fosfomycin and deoxycholate. The chain is Multidrug resistance protein MdtG from Escherichia coli O17:K52:H18 (strain UMN026 / ExPEC).